A 486-amino-acid polypeptide reads, in one-letter code: Ribulose bisphosphate carboxylase large chain (486 aa).

The substrate site is built by N125 and T175. K177 acts as the Proton acceptor in catalysis. Substrate is bound at residue K179. Mg(2+) contacts are provided by K203, D205, and E206. N6-carboxylysine is present on K203. The Proton acceptor role is filled by H295. Substrate is bound by residues R296, H328, and S380.

Belongs to the RuBisCO large chain family. Type I subfamily. Heterohexadecamer of 8 large chains and 8 small chains. Mg(2+) serves as cofactor.

The enzyme catalyses 2 (2R)-3-phosphoglycerate + 2 H(+) = D-ribulose 1,5-bisphosphate + CO2 + H2O. It carries out the reaction D-ribulose 1,5-bisphosphate + O2 = 2-phosphoglycolate + (2R)-3-phosphoglycerate + 2 H(+). Its function is as follows. RuBisCO catalyzes two reactions: the carboxylation of D-ribulose 1,5-bisphosphate, the primary event in carbon dioxide fixation, as well as the oxidative fragmentation of the pentose substrate. Both reactions occur simultaneously and in competition at the same active site. The chain is Ribulose bisphosphate carboxylase large chain from Bradyrhizobium diazoefficiens (strain JCM 10833 / BCRC 13528 / IAM 13628 / NBRC 14792 / USDA 110).